The following is a 491-amino-acid chain: Delayed-rectifier potassium channel regulatory subunit KCNS3 (491 aa).

Residues 1–182 lie on the Cytoplasmic side of the membrane; it reads MVFGEFFHRP…IRMENPAYCL (182 aa). A helical transmembrane segment spans residues 183–204; the sequence is SAKLIAISSLSVVLASIVAMCV. The Extracellular segment spans residues 205 to 220; it reads HSMSEFQNEDGEVDDP. The helical transmembrane segment at 221–243 threads the bilayer; that stretch reads VLEGVEIACIAWFTGELAIRLVA. At 244 to 254 the chain is on the cytoplasmic side; that stretch reads APSQKKFWKNP. Residues 255 to 275 traverse the membrane as a helical segment; the sequence is LNIIDFVSIIPFYATLAVDTK. The Extracellular segment spans residues 276–285; it reads EEESEDIENM. A helical; Voltage-sensor transmembrane segment spans residues 286 to 306; it reads GKVVQILRLMRIFRILKLARH. Topologically, residues 307–321 are cytoplasmic; the sequence is SVGLRSLGATLRHSY. Residues 322 to 343 traverse the membrane as a helical segment; it reads HEVGLLLLFLSVGISIFSVLIY. Over 344–357 the chain is Extracellular; that stretch reads SVEKDELASSLTSI. The segment at residues 358–369 is an intramembrane region (helical); that stretch reads PICWWWATISMT. The Selectivity filter motif lies at 370–375; that stretch reads TVGYGD. An intramembrane segment occupies 370-377; the sequence is TVGYGDTH. The Extracellular portion of the chain corresponds to 378-384; sequence PVTLAGK. Residues 385 to 413 traverse the membrane as a helical segment; it reads IIASTCIICGILVVALPITIIFNKFSKYY. The Cytoplasmic portion of the chain corresponds to 414–491; it reads QKQKDMDVDQ…TASLENCTAK (78 aa).

This sequence belongs to the potassium channel family. S (TC 1.A.1.2) subfamily. Kv9.3/KCNS3 sub-subfamily. As to quaternary structure, heterotetramer with KCNB1. Does not form homomultimers. As to expression, expressed in myocytes. Detected in lung, spleen, brain and heart.

The protein localises to the cell membrane. Functionally, potassium channel regulatory subunit that modulates the delayed rectifier potassium channel activity of KCNB1 by namely slowing down the deactivation and inactivation time constants. While it does not form functional channel on its own, it can form functional heterotetrameric channels with KCNB1. This chain is Delayed-rectifier potassium channel regulatory subunit KCNS3, found in Rattus norvegicus (Rat).